The following is a 65-amino-acid chain: Large ribosomal subunit protein bL35 (65 aa).

The protein belongs to the bacterial ribosomal protein bL35 family.

The chain is Large ribosomal subunit protein bL35 from Thermoanaerobacter sp. (strain X514).